The primary structure comprises 142 residues: MFLGTHTPKLDEKGRFFLPAKFRDELDDGLVITRGQDRCLAIYPTETFVEMTREIAKGSVSVKKVRDYQRMLAAGASDTAPDKQGRVMIPPMLRRYAALNKEIVVVGAITRVEVWDATEWEKYSEAQEEAFADMNEEVFAEQ.

2 consecutive SpoVT-AbrB domains span residues 5 to 47 (THTP…PTET) and 76 to 119 (ASDT…DATE).

It belongs to the MraZ family. In terms of assembly, forms oligomers.

The protein localises to the cytoplasm. It localises to the nucleoid. The sequence is that of Transcriptional regulator MraZ from Cutibacterium acnes (strain DSM 16379 / KPA171202) (Propionibacterium acnes).